A 503-amino-acid chain; its full sequence is TGF-beta receptor type-1 (503 aa).

A signal peptide spans 1–29 (MEVAAGAPRSRLLLFVLAATATLAPEATA). Residues 30 to 126 (FQCFCHLCTK…PPSGLGPVEL (97 aa)) lie on the Extracellular side of the membrane. Disulfide bonds link C32–C50, C34–C37, C44–C67, C82–C96, and C97–C102. N41 is a glycosylation site (N-linked (GlcNAc...) asparagine). The helical transmembrane segment at 127–147 (AAVIAGPVCFVCISLMLMVYI) threads the bilayer. The Cytoplasmic portion of the chain corresponds to 148–503 (CHNRTVIHHR…QLSQQEGIKM (356 aa)). Phosphoserine is present on S165. A GS domain is found at 175–204 (TTLKDLIYDMTTSGSGSGLPLLVQRTIART). 2 positions are modified to phosphothreonine; by TGFBR2: T185 and T186. A phosphoserine; by TGFBR2 mark is found at S187, S189, and S191. The short motif at 193–194 (LP) is the FKBP1A-binding element. In terms of domain architecture, Protein kinase spans 205–495 (IVLQESIGKG…LRIKKTLSQL (291 aa)). ATP is bound by residues 211 to 219 (IGKGRFGEV) and K232. The active-site Proton acceptor is D333. K391 participates in a covalent cross-link: Glycyl lysine isopeptide (Lys-Gly) (interchain with G-Cter in SUMO).

It belongs to the protein kinase superfamily. TKL Ser/Thr protein kinase family. TGFB receptor subfamily. Homodimer; in the endoplasmic reticulum but also at the cell membrane. Heterohexamer; TGFB1, TGFB2 and TGFB3 homodimeric ligands assemble a functional receptor composed of two TGFBR1 and TGFBR2 heterodimers to form a ligand-receptor heterohexamer. The respective affinity of TGBRB1 and TGFBR2 for the ligands may modulate the kinetics of assembly of the receptor and may explain the different biological activities of TGFB1, TGFB2 and TGFB3. Component of a complex composed of TSC22D1 (via N-terminus), TGFBR1 and TGFBR2; the interaction between TSC22D1 and TGFBR1 is inhibited by SMAD7 and promoted by TGFB1. Interacts with CD109; inhibits TGF-beta receptor activation in keratinocytes. Interacts with RBPMS. Interacts (unphosphorylated) with FKBP1A; prevents TGFBR1 phosphorylation by TGFBR2 and stabilizes it in the inactive conformation. Interacts with SMAD2, SMAD3 and ZFYVE9; ZFYVE9 recruits SMAD2 and SMAD3 to the TGF-beta receptor. Interacts with TRAF6 and MAP3K7; induces MAP3K7 activation by TRAF6. Interacts with PARD6A; involved in TGF-beta induced epithelial to mesenchymal transition. Interacts with NEDD4L. Interacts with SMAD7, SMURF1 and SMURF2; SMAD7 recruits NEDD4L, SMURF1 and SMURF2 to the TGF-beta receptor. Interacts with USP15 and VPS39. Interacts with SDCBP (via C-terminus). Interacts with CAV1 and this interaction is impaired in the presence of SDCBP. Interacts with APPL1; interaction is TGF beta dependent; mediates trafficking of the TGFBR1 from the endosomes to the nucleus via microtubules in a TRAF6-dependent manner. Interacts with GPR50; this interaction promotes the constitutive activation of SMAD signaling pathway. It depends on Mg(2+) as a cofactor. The cofactor is Mn(2+). In terms of processing, phosphorylated at basal levels in the absence of ligand. Activated upon phosphorylation by TGFBR2, mainly in the GS domain. Phosphorylation in the GS domain abrogates FKBP1A-binding. Post-translationally, N-Glycosylated. Ubiquitinated; undergoes ubiquitination catalyzed by several E3 ubiquitin ligases including SMURF1, SMURF2 and NEDD4L2. Results in the proteasomal and/or lysosomal degradation of the receptor thereby negatively regulating its activity. Deubiquitinated by USP15, leading to stabilization of the protein and enhanced TGF-beta signal. Its ubiquitination and proteasome-mediated degradation is negatively regulated by SDCBP.

The protein localises to the cell membrane. Its subcellular location is the cell junction. It is found in the tight junction. The protein resides in the membrane raft. It localises to the cell surface. The enzyme catalyses L-threonyl-[receptor-protein] + ATP = O-phospho-L-threonyl-[receptor-protein] + ADP + H(+). The catalysed reaction is L-seryl-[receptor-protein] + ATP = O-phospho-L-seryl-[receptor-protein] + ADP + H(+). With respect to regulation, kept in an inactive conformation by FKBP1A preventing receptor activation in absence of ligand. CD109 is another inhibitor of the receptor. In terms of biological role, transmembrane serine/threonine kinase forming with the TGF-beta type II serine/threonine kinase receptor, TGFBR2, the non-promiscuous receptor for the TGF-beta cytokines TGFB1, TGFB2 and TGFB3. Transduces the TGFB1, TGFB2 and TGFB3 signal from the cell surface to the cytoplasm and is thus regulating a plethora of physiological and pathological processes including cell cycle arrest in epithelial and hematopoietic cells, control of mesenchymal cell proliferation and differentiation, wound healing, extracellular matrix production, immunosuppression and carcinogenesis. The formation of the receptor complex composed of 2 TGFBR1 and 2 TGFBR2 molecules symmetrically bound to the cytokine dimer results in the phosphorylation and the activation of TGFBR1 by the constitutively active TGFBR2. Activated TGFBR1 phosphorylates SMAD2 which dissociates from the receptor and interacts with SMAD4. The SMAD2-SMAD4 complex is subsequently translocated to the nucleus where it modulates the transcription of the TGF-beta-regulated genes. This constitutes the canonical SMAD-dependent TGF-beta signaling cascade. Also involved in non-canonical, SMAD-independent TGF-beta signaling pathways. For instance, TGFBR1 induces TRAF6 autoubiquitination which in turn results in MAP3K7 ubiquitination and activation to trigger apoptosis. Also regulates epithelial to mesenchymal transition through a SMAD-independent signaling pathway through PARD6A phosphorylation and activation. This is TGF-beta receptor type-1 (TGFBR1) from Sus scrofa (Pig).